Consider the following 309-residue polypeptide: Acetylglutamate kinase (309 aa).

Substrate is bound by residues 69-70 (GG), R91, and N194.

Belongs to the acetylglutamate kinase family. ArgB subfamily.

The protein localises to the cytoplasm. It carries out the reaction N-acetyl-L-glutamate + ATP = N-acetyl-L-glutamyl 5-phosphate + ADP. The protein operates within amino-acid biosynthesis; L-arginine biosynthesis; N(2)-acetyl-L-ornithine from L-glutamate: step 2/4. Catalyzes the ATP-dependent phosphorylation of N-acetyl-L-glutamate. The sequence is that of Acetylglutamate kinase from Vesicomyosocius okutanii subsp. Calyptogena okutanii (strain HA).